The chain runs to 147 residues: Biogenesis of lysosome-related organelles complex 1 subunit 1 (147 aa).

Disordered stretches follow at residues 1–25 and 125–147; these read MLTS…VRRK and SSGA…PSAT.

Belongs to the BLOC1S1 family. In terms of assembly, component of the biogenesis of lysosome-related organelles complex-1 (BLOC-1) composed of Blos1, Blos2, Blos3, Blos4, Dysb, Muted, Pldn and Snapin. Interacts with Pldn.

In terms of biological role, component of the biogenesis of lysosome-related organelles complex-1 (BLOC-1) involved in pigment granule biogenesis and membrane trafficking in synapses. In response to high synaptic activity at neuromuscular junctions, stabilizes Pldn protein levels and, together with Pldn, plays a role in promoting efficient synaptic vesicle recycling and re-formation through early endosomes. This is Biogenesis of lysosome-related organelles complex 1 subunit 1 from Drosophila melanogaster (Fruit fly).